The sequence spans 256 residues: Probable serine/threonine-protein kinase YbdM (256 aa).

One can recognise a Protein kinase domain in the interval 25–256; it reads YKIEECLGMG…DLNRAIQSVT (232 aa). ATP contacts are provided by residues 31-39 and lysine 54; that span reads LGMGGYGLV. Aspartate 149 functions as the Proton acceptor in the catalytic mechanism.

Belongs to the protein kinase superfamily. Ser/Thr protein kinase family.

It catalyses the reaction L-seryl-[protein] + ATP = O-phospho-L-seryl-[protein] + ADP + H(+). The enzyme catalyses L-threonyl-[protein] + ATP = O-phospho-L-threonyl-[protein] + ADP + H(+). This chain is Probable serine/threonine-protein kinase YbdM (ybdM), found in Bacillus subtilis (strain 168).